Here is a 491-residue protein sequence, read N- to C-terminus: ATP synthase subunit beta, chloroplastic (491 aa).

172–179 (GGAGVGKT) provides a ligand contact to ATP.

The protein belongs to the ATPase alpha/beta chains family. In terms of assembly, F-type ATPases have 2 components, CF(1) - the catalytic core - and CF(0) - the membrane proton channel. CF(1) has five subunits: alpha(3), beta(3), gamma(1), delta(1), epsilon(1). CF(0) has four main subunits: a(1), b(1), b'(1) and c(9-12).

It localises to the plastid. It is found in the chloroplast thylakoid membrane. It carries out the reaction ATP + H2O + 4 H(+)(in) = ADP + phosphate + 5 H(+)(out). Produces ATP from ADP in the presence of a proton gradient across the membrane. The catalytic sites are hosted primarily by the beta subunits. This Pisum sativum (Garden pea) protein is ATP synthase subunit beta, chloroplastic.